Consider the following 847-residue polypeptide: MEPWKQCAQWLIHCKVLPTNHRVTWDSAQVFDLAQTLRDGVLLCQLLNNLRAHSINLKEINLRPQMSQFLCLKNIRTFLTACCETFGMRKSELFEAFDLFDVRDFGKVIETLSRLSRTPIALATGIRPFPTEESINDEDIYKGLPDLIDETLVEDEEDLYDCVYGEDEGGEVYEDLMKAEEAHQPKCPENDIRSCCLAEIKQTEEKYTETLESIEKYFMAPLKRFLTAAEFDSVFINIPELVKLHRNLMQEIHDSIVNKNDQNLYQVFINYKERLVIYGQYCSGVESAISSLDYISKTKEDVKLKLEECSKRANNGKFTLRDLLVVPMQRVLKYHLLLQELVKHTTDPTEKANLKLALDAMKDLAQYVNEVKRDNETLREIKQFQLSIENLNQPVLLFGRPQGDGEIRITTLDKHTKQERHIFLFDLAVIVCKRKGDNYEMKEIIDLQQYKIANNPTTDKENKKWSYGFYLIHTQGQNGLEFYCKTKDLKKKWLEQFEMALSNIRPDYADSNFHDFKMHTFTRVTSCKVCQMLLRGTFYQGYLCFKCGARAHKECLGRVDNCGRVNSGEQGTLKLPEKRTNGLRRTPKQVDPGLPKMQVIRNYSGTPPPALHEGPPLQLQAGDTVELLKGDAHSLFWQGRNLASGEVGFFPSDAVKPCPCVPKPVDYSCQPWYAGAMERLQAETELINRVNSTYLVRHRTKESGEYAISIKYNNEAKHIKILTRDGFFHIAENRKFKSLMELVEYYKHHSLKEGFRTLDTTLQFPYKEPEHSAGQRGNRAGNSLLSPKVLGIAIARYDFCARDMRELSLLKGDVVKIYTKMSANGWWRGEVNGRVGWFPSTYVEEDE.

One can recognise a Calponin-homology (CH) domain in the interval 1–119 (MEPWKQCAQW…ETLSRLSRTP (119 aa)). Tyr-141 carries the post-translational modification Phosphotyrosine. The 180-residue stretch at 192-371 (IRSCCLAEIK…KDLAQYVNEV (180 aa)) folds into the DH domain. Residues 400–502 (RPQGDGEIRI…WLEQFEMALS (103 aa)) form the PH domain. The Phorbol-ester/DAG-type zinc-finger motif lies at 513–562 (FHDFKMHTFTRVTSCKVCQMLLRGTFYQGYLCFKCGARAHKECLGRVDNC). Residues 560–847 (DNCGRVNSGE…FPSTYVEEDE (288 aa)) are sufficient for interaction with ROS1. An SH3 1 domain is found at 592–660 (PGLPKMQVIR…PSDAVKPCPC (69 aa)). Residues 672–766 (WYAGAMERLQ…TLDTTLQFPY (95 aa)) enclose the SH2 domain. Positions 788–847 (KVLGIAIARYDFCARDMRELSLLKGDVVKIYTKMSANGWWRGEVNGRVGWFPSTYVEEDE) constitute an SH3 2 domain.

As to quaternary structure, interacts with the PH domain of SH2B2. Interacts (via SH2 domains) with the phosphorylated form of EPHA2. Interacts with ROS1; constitutive interaction that mediates VAV3 phosphorylation. Post-translationally, phosphorylated. Phosphorylation can be mediated by ROS1. In osteoclasts, undergoes tyrosine phosphorylation in response to CSF1. In terms of tissue distribution, isoform 1 and isoform 3 are widely expressed; both are expressed at very low levels in skeletal muscle. In keratinocytes, isoform 1 is less abundant than isoform 3. Isoform 3 is detected at very low levels, if any, in adrenal gland, bone marrow, spleen, fetal brain and spinal cord; in these tissues, isoform 1 is readily detectable.

Functionally, exchange factor for GTP-binding proteins RhoA, RhoG and, to a lesser extent, Rac1. Binds physically to the nucleotide-free states of those GTPases. Plays an important role in angiogenesis. Its recruitment by phosphorylated EPHA2 is critical for EFNA1-induced RAC1 GTPase activation and vascular endothelial cell migration and assembly. May be important for integrin-mediated signaling, at least in some cell types. In osteoclasts, along with SYK tyrosine kinase, required for signaling through integrin alpha-v/beta-1 (ITAGV-ITGB1), a crucial event for osteoclast proper cytoskeleton organization and function. This signaling pathway involves RAC1, but not RHO, activation. Necessary for proper wound healing. In the course of wound healing, required for the phagocytotic cup formation preceding macrophage phagocytosis of apoptotic neutrophils. Responsible for integrin beta-2 (ITGB2)-mediated macrophage adhesion and, to a lesser extent, contributes to beta-3 (ITGB3)-mediated adhesion. Does not affect integrin beta-1 (ITGB1)-mediated adhesion. This is Guanine nucleotide exchange factor VAV3 (VAV3) from Homo sapiens (Human).